The sequence spans 136 residues: MARTKQTARKATAWQAPRKPLATKAAGKRAPPTGGIKKPHRYKPGTLALREIRKYQKSTQLLLRKLPFQRLVREIAQAISPDLRFQSAAIGALQEASEAYLVQLFEDTNLCAIHARRVTIMPRDMQLARRLRREGP.

Positions 1–16 (MARTKQTARKATAWQA) are enriched in low complexity. A disordered region spans residues 1 to 43 (MARTKQTARKATAWQAPRKPLATKAAGKRAPPTGGIKKPHRYK). An Asymmetric dimethylarginine modification is found at R3. Residue R3 is modified to Citrulline; alternate. T4 carries the phosphothreonine modification. The residue at position 5 (K5) is an Allysine; alternate. K5 is modified (N6,N6,N6-trimethyllysine; alternate). K5 is modified (N6,N6-dimethyllysine; alternate). Position 5 is an N6-(2-hydroxyisobutyryl)lysine; alternate (K5). Residue K5 is modified to N6-(beta-hydroxybutyryl)lysine; alternate. An N6-acetyllysine; alternate modification is found at K5. Residue K5 is modified to N6-crotonyllysine; alternate. K5 carries the post-translational modification N6-methyllysine; alternate. Q6 carries the post-translational modification 5-glutamyl dopamine; alternate. Position 6 is a 5-glutamyl serotonin; alternate (Q6). T7 bears the Phosphothreonine mark. A Citrulline; alternate modification is found at R9. The residue at position 9 (R9) is a Symmetric dimethylarginine. Position 10 is an N6,N6,N6-trimethyllysine; alternate (K10). Residue K10 is modified to N6,N6-dimethyllysine; alternate. N6-(2-hydroxyisobutyryl)lysine; alternate is present on K10. At K10 the chain carries N6-(beta-hydroxybutyryl)lysine; alternate. K10 bears the N6-acetyllysine; alternate mark. Residue K10 is modified to N6-crotonyllysine; alternate. K10 is subject to N6-methyllysine; alternate. K10 carries the post-translational modification N6-butyryllysine; alternate. N6-lactoyllysine; alternate is present on K10. Phosphothreonine is present on T12. R18 is modified (asymmetric dimethylarginine). At R18 the chain carries Citrulline; alternate. K19, K24, K28, and K37 each carry N6-(2-hydroxyisobutyryl)lysine; alternate. Residues K19, K24, and K28 each carry the N6-(beta-hydroxybutyryl)lysine; alternate modification. N6-acetyllysine; alternate is present on residues K19, K24, K28, and K37. An N6-crotonyllysine; alternate mark is found at K19, K24, and K28. Residues K19, K24, K28, and K37 each carry the N6-methyllysine; alternate modification. N6-butyryllysine; alternate is present on residues K19 and K24. 3 positions are modified to N6-lactoyllysine; alternate: K19, K24, and K28. N6-glutaryllysine; alternate is present on residues K19, K24, and K28. N6,N6,N6-trimethyllysine; alternate is present on residues K28 and K37. N6,N6-dimethyllysine; alternate occurs at positions 28 and 37. Position 38 is an N6-methyllysine (K38). The residue at position 42 (Y42) is a Phosphotyrosine. The residue at position 57 (K57) is an N6,N6,N6-trimethyllysine; alternate. K57 carries the N6-(2-hydroxyisobutyryl)lysine; alternate modification. Position 57 is an N6-(beta-hydroxybutyryl)lysine; alternate (K57). K57 is subject to N6-acetyllysine; alternate. Residue K57 is modified to N6-crotonyllysine; alternate. K57 carries the N6-lactoyllysine; alternate modification. K57 carries the post-translational modification N6-glutaryllysine; alternate. K57 bears the N6-methyllysine mark. K57 carries the N6-succinyllysine; alternate modification. The residue at position 58 (S58) is a Phosphoserine. K65 is modified (N6-(2-hydroxyisobutyryl)lysine; alternate). Residue K65 is modified to N6-methyllysine; alternate. A Phosphoserine modification is found at S87. T108 bears the Phosphothreonine mark.

This sequence belongs to the histone H3 family. The nucleosome is a histone octamer containing two molecules each of H2A, H2B, H3 and H4 assembled in one H3-H4 heterotetramer and two H2A-H2B heterodimers. The octamer wraps approximately 147 bp of DNA. Interacts with HIRA, a chaperone required for its incorporation into nucleosomes. Does not interact with DAXX chaperone. Acetylation is generally linked to gene activation. Acetylation on Lys-10 (H3K9ac) impairs methylation at Arg-9 (H3R8me2s). Acetylation on Lys-19 (H3K18ac) and Lys-24 (H3K24ac) favors methylation at Arg-18 (H3R17me). In terms of processing, citrullination at Arg-9 (H3R8ci) and/or Arg-18 (H3R17ci) impairs methylation and represses transcription. Post-translationally, asymmetric dimethylation at Arg-18 (H3R17me2a) is linked to gene activation. Symmetric dimethylation at Arg-9 (H3R8me2s) is linked to gene repression. Asymmetric dimethylation at Arg-3 (H3R2me2a) is linked to gene repression and is mutually exclusive with H3 Lys-5 methylation (H3K4me2 and H3K4me3). H3R2me2a is present at the 3' of genes regardless of their transcription state and is enriched on inactive promoters, while it is absent on active promoters. Methylation at Lys-5 (H3K4me) facilitates subsequent acetylation of H3 and H4. Methylation at Lys-10 (H3K9me) and Lys-28 (H3K27me), which are linked to gene repression, are underrepresented. Methylation at Lys-10 (H3K9me) is a specific target for HP1 proteins (CBX1, CBX3 and CBX5) and prevents subsequent acetylation of H3 and H4. In terms of processing, phosphorylation at Thr-7 (H3T6ph) is a specific tag for epigenetic transcriptional activation that prevents demethylation of Lys-5 (H3K4me) by LSD1/KDM1A. At centromeres, specifically phosphorylated at Thr-12 (H3T11ph) from prophase to early anaphase. Phosphorylation at Thr-12 (H3T11ph) is a specific tag for epigenetic transcriptional activation that promotes demethylation of Lys-10 (H3K9me). Phosphorylation at Tyr-42 (H3Y41ph) promotes exclusion of CBX5 (HP1 alpha) from chromatin. Post-translationally, lysine deamination at Lys-5 (H3K4all) to form allysine. Allysine formation only takes place on H3K4me3 and results in gene repression. Crotonylation (Kcr) is specifically present in male germ cells and marks testis-specific genes in post-meiotic cells, including X-linked genes that escape sex chromosome inactivation in haploid cells. Crotonylation marks active promoters and enhancers and confers resistance to transcriptional repressors. It is also associated with post-meiotically activated genes on autosomes. In terms of processing, butyrylation of histones marks active promoters and competes with histone acetylation. It is present during late spermatogenesis. Expressed at low level in some tissues, such as testis and brain.

It is found in the nucleus. Its subcellular location is the chromosome. In terms of biological role, primate-specific variant histone H3, which constitutes a core component of nucleosomes. Histone H3.Y-containing nucleosomes accumulate around transcription start sites and have flexible DNA ends, suggesting that they form relaxed chromatin that allows transcription factor access. Histone H1 binds less efficiently to histone H3.Y-containing nucleosomes. Nucleosomes wrap and compact DNA into chromatin, limiting DNA accessibility to the cellular machineries which require DNA as a template. Histones thereby play a central role in transcription regulation, DNA repair, DNA replication and chromosomal stability. DNA accessibility is regulated via a complex set of post-translational modifications of histones, also called histone code, and nucleosome remodeling. In Homo sapiens (Human), this protein is Histone H3.Y.